The following is a 1002-amino-acid chain: TOG array regulator of axonemal microtubules protein 2 (1002 aa).

Disordered stretches follow at residues 54 to 74, 131 to 214, 332 to 351, 402 to 421, and 426 to 450; these read SSVL…EDQS, KRRL…SAQE, ETRS…KVQV, PLRG…PRRN, and LQRK…GFAR.

It belongs to the Crescerin family.

This is TOG array regulator of axonemal microtubules protein 2 (Togaram2) from Mus musculus (Mouse).